A 412-amino-acid chain; its full sequence is Phosphoribosylamine--glycine ligase (412 aa).

One can recognise an ATP-grasp domain in the interval 108 to 309 (KSIMKKYGVP…LAQAIIDILA (202 aa)). Position 134–190 (134–190 (LDEKGVPLVIKADGLAAGKGVTVAFDIETAKSALADIFSGSQGKVVIEEFLDGEEFS)) interacts with ATP. Residues glutamate 279 and asparagine 281 each contribute to the Mg(2+) site.

It belongs to the GARS family. Requires Mg(2+) as cofactor. The cofactor is Mn(2+).

It carries out the reaction 5-phospho-beta-D-ribosylamine + glycine + ATP = N(1)-(5-phospho-beta-D-ribosyl)glycinamide + ADP + phosphate + H(+). It functions in the pathway purine metabolism; IMP biosynthesis via de novo pathway; N(1)-(5-phospho-D-ribosyl)glycinamide from 5-phospho-alpha-D-ribose 1-diphosphate: step 2/2. This chain is Phosphoribosylamine--glycine ligase, found in Lactococcus lactis subsp. lactis (strain IL1403) (Streptococcus lactis).